The sequence spans 366 residues: Zinc finger CCCH domain-containing protein 11 (366 aa).

The tract at residues 43–66 is disordered; that stretch reads LHQAVQPKPDPTKTAAKKKKEEEK. The stretch at 54–79 forms a coiled coil; the sequence is TKTAAKKKKEEEKAREKELNDLFKVA. C3H1-type zinc fingers lie at residues 90–117 and 160–198; these read DPKSIVCEFFKVGQCQKGFKCKFSHDLN and KPTDIVCKYFLDAVEKKQYGWFWVCPNGGKDCHYRHALP. Residues 208 to 234 are a coiled coil; sequence KALLEEESEKIAIEDEIEDQRKKVKTT. Residues 293–338 are disordered; the sequence is YERQEESEANEEPSNKNQDEGPSSSTSNGKEVEESDDEDINIDDDL. Positions 312-321 are enriched in polar residues; the sequence is EGPSSSTSNG. Residues 325–338 show a composition bias toward acidic residues; it reads EESDDEDINIDDDL.

This Oryza sativa subsp. japonica (Rice) protein is Zinc finger CCCH domain-containing protein 11.